The chain runs to 242 residues: 1-(5-phosphoribosyl)-5-[(5-phosphoribosylamino)methylideneamino] imidazole-4-carboxamide isomerase (242 aa).

Aspartate 8 functions as the Proton acceptor in the catalytic mechanism. The active-site Proton donor is the aspartate 129.

Belongs to the HisA/HisF family.

The protein localises to the cytoplasm. The catalysed reaction is 1-(5-phospho-beta-D-ribosyl)-5-[(5-phospho-beta-D-ribosylamino)methylideneamino]imidazole-4-carboxamide = 5-[(5-phospho-1-deoxy-D-ribulos-1-ylimino)methylamino]-1-(5-phospho-beta-D-ribosyl)imidazole-4-carboxamide. It participates in amino-acid biosynthesis; L-histidine biosynthesis; L-histidine from 5-phospho-alpha-D-ribose 1-diphosphate: step 4/9. This chain is 1-(5-phosphoribosyl)-5-[(5-phosphoribosylamino)methylideneamino] imidazole-4-carboxamide isomerase, found in Syntrophus aciditrophicus (strain SB).